The chain runs to 456 residues: tRNA(Ile)-lysidine synthase (456 aa).

27–32 (SGGVDS) serves as a coordination point for ATP.

It belongs to the tRNA(Ile)-lysidine synthase family.

Its subcellular location is the cytoplasm. It carries out the reaction cytidine(34) in tRNA(Ile2) + L-lysine + ATP = lysidine(34) in tRNA(Ile2) + AMP + diphosphate + H(+). In terms of biological role, ligates lysine onto the cytidine present at position 34 of the AUA codon-specific tRNA(Ile) that contains the anticodon CAU, in an ATP-dependent manner. Cytidine is converted to lysidine, thus changing the amino acid specificity of the tRNA from methionine to isoleucine. The polypeptide is tRNA(Ile)-lysidine synthase (Vibrio atlanticus (strain LGP32) (Vibrio splendidus (strain Mel32))).